A 349-amino-acid polypeptide reads, in one-letter code: tRNA N6-adenosine threonylcarbamoyltransferase (349 aa).

Fe cation is bound by residues H118 and H122. Substrate contacts are provided by residues 141–145 (LVSGG), D174, G187, and N280. Residue D308 coordinates Fe cation.

The protein belongs to the KAE1 / TsaD family. Fe(2+) is required as a cofactor.

The protein localises to the cytoplasm. The catalysed reaction is L-threonylcarbamoyladenylate + adenosine(37) in tRNA = N(6)-L-threonylcarbamoyladenosine(37) in tRNA + AMP + H(+). In terms of biological role, required for the formation of a threonylcarbamoyl group on adenosine at position 37 (t(6)A37) in tRNAs that read codons beginning with adenine. Is involved in the transfer of the threonylcarbamoyl moiety of threonylcarbamoyl-AMP (TC-AMP) to the N6 group of A37, together with TsaE and TsaB. TsaD likely plays a direct catalytic role in this reaction. This is tRNA N6-adenosine threonylcarbamoyltransferase from Acidovorax sp. (strain JS42).